The primary structure comprises 286 residues: Pantothenate synthetase (286 aa).

An ATP-binding site is contributed by 30 to 37 (MGNLHSGH). Histidine 37 functions as the Proton donor in the catalytic mechanism. Glutamine 61 provides a ligand contact to (R)-pantoate. Glutamine 61 provides a ligand contact to beta-alanine. Residue 149–152 (GQKD) coordinates ATP. Glutamine 155 is a binding site for (R)-pantoate. ATP is bound by residues valine 178 and 186–189 (LSSR).

It belongs to the pantothenate synthetase family. In terms of assembly, homodimer.

It is found in the cytoplasm. It catalyses the reaction (R)-pantoate + beta-alanine + ATP = (R)-pantothenate + AMP + diphosphate + H(+). It functions in the pathway cofactor biosynthesis; (R)-pantothenate biosynthesis; (R)-pantothenate from (R)-pantoate and beta-alanine: step 1/1. Functionally, catalyzes the condensation of pantoate with beta-alanine in an ATP-dependent reaction via a pantoyl-adenylate intermediate. This is Pantothenate synthetase from Pseudomonas fluorescens (strain Pf0-1).